The following is a 776-amino-acid chain: Probable E3 ubiquitin-protein ligase HECTD2 (776 aa).

Positions 1 to 46 (MSEAVRVPSPATPLVVAAAAPEERKGKESEREKLPPIVSAGAGATA) are disordered. Low complexity predominate over residues 7 to 20 (VPSPATPLVVAAAA). Ser-9 is modified (phosphoserine). A compositionally biased stretch (basic and acidic residues) spans 21-34 (PEERKGKESEREKL). The region spanning 437–776 (KRADLKKKLK…ISNSEGFGLE (340 aa)) is the HECT domain. Residue Cys-744 is the Glycyl thioester intermediate of the active site.

It catalyses the reaction S-ubiquitinyl-[E2 ubiquitin-conjugating enzyme]-L-cysteine + [acceptor protein]-L-lysine = [E2 ubiquitin-conjugating enzyme]-L-cysteine + N(6)-ubiquitinyl-[acceptor protein]-L-lysine.. It functions in the pathway protein modification; protein ubiquitination. Functionally, E3 ubiquitin-protein ligase which accepts ubiquitin from an E2 ubiquitin-conjugating enzyme in the form of a thioester and then directly transfers the ubiquitin to targeted substrates. This Pongo abelii (Sumatran orangutan) protein is Probable E3 ubiquitin-protein ligase HECTD2 (HECTD2).